We begin with the raw amino-acid sequence, 198 residues long: Glycerol-3-phosphate acyltransferase 3 (198 aa).

Helical transmembrane passes span 4-24 (TYLL…LVVG), 71-91 (LPMV…AVLG), 113-133 (LLCY…TLLF), and 147-167 (VVAV…AMCL).

It belongs to the PlsY family. In terms of assembly, probably interacts with PlsX.

It localises to the cell membrane. The catalysed reaction is an acyl phosphate + sn-glycerol 3-phosphate = a 1-acyl-sn-glycero-3-phosphate + phosphate. The protein operates within lipid metabolism; phospholipid metabolism. Its function is as follows. Catalyzes the transfer of an acyl group from acyl-phosphate (acyl-PO(4)) to glycerol-3-phosphate (G3P) to form lysophosphatidic acid (LPA). This enzyme utilizes acyl-phosphate as fatty acyl donor, but not acyl-CoA or acyl-ACP. In Bacillus anthracis, this protein is Glycerol-3-phosphate acyltransferase 3.